The sequence spans 381 residues: Tetraacyldisaccharide 4'-kinase (381 aa).

78-85 (AVGGTGKT) is a binding site for ATP.

The protein belongs to the LpxK family.

The enzyme catalyses a lipid A disaccharide + ATP = a lipid IVA + ADP + H(+). It participates in glycolipid biosynthesis; lipid IV(A) biosynthesis; lipid IV(A) from (3R)-3-hydroxytetradecanoyl-[acyl-carrier-protein] and UDP-N-acetyl-alpha-D-glucosamine: step 6/6. In terms of biological role, transfers the gamma-phosphate of ATP to the 4'-position of a tetraacyldisaccharide 1-phosphate intermediate (termed DS-1-P) to form tetraacyldisaccharide 1,4'-bis-phosphate (lipid IVA). In Syntrophobacter fumaroxidans (strain DSM 10017 / MPOB), this protein is Tetraacyldisaccharide 4'-kinase.